The following is an 89-amino-acid chain: Small ribosomal subunit protein uS15 (89 aa).

This sequence belongs to the universal ribosomal protein uS15 family. Part of the 30S ribosomal subunit. Forms a bridge to the 50S subunit in the 70S ribosome, contacting the 23S rRNA.

Its function is as follows. One of the primary rRNA binding proteins, it binds directly to 16S rRNA where it helps nucleate assembly of the platform of the 30S subunit by binding and bridging several RNA helices of the 16S rRNA. In terms of biological role, forms an intersubunit bridge (bridge B4) with the 23S rRNA of the 50S subunit in the ribosome. This chain is Small ribosomal subunit protein uS15, found in Acaryochloris marina (strain MBIC 11017).